A 69-amino-acid polypeptide reads, in one-letter code: Large ribosomal subunit protein uL29 (69 aa).

It belongs to the universal ribosomal protein uL29 family.

The sequence is that of Large ribosomal subunit protein uL29 from Rhodopseudomonas palustris (strain TIE-1).